The following is a 308-amino-acid chain: Palmitoyltransferase ZDHHC7 (308 aa).

Residues 1 to 50 (MQPSGHRLRDIEHHPLLTDNDNYDSASSSSSEADMADRVWFIRDGCGMVC) are Cytoplasmic-facing. Residues 51 to 71 (AVMTWLLVVYADFVVTFVMLL) form a helical membrane-spanning segment. Residues 72-75 (PSKD) lie on the Lumenal side of the membrane. The chain crosses the membrane as a helical span at residues 76–96 (FWYSVVNGVLFNCLAVLALSS). The Cytoplasmic segment spans residues 97-173 (HLRTMLTDPG…NNCVGEKNQR (77 aa)). One can recognise a DHHC domain in the interval 130-180 (YKCPKCCCIKPERAHHCSICKRCIRKMDHHCPWVNNCVGEKNQRFFVLFTM). Cysteine 160 acts as the S-palmitoyl cysteine intermediate in catalysis. A helical membrane pass occupies residues 174–194 (FFVLFTMYIALSSIHALILCG). Residues 195-217 (LQFISCVRGQWTECSDFSPPITV) lie on the Lumenal side of the membrane. The chain crosses the membrane as a helical span at residues 218 to 238 (ILLVFLCLEGLLFFTFTAVMF). Residues 239–308 (GTQIHSICND…TRKGGPEFSV (70 aa)) lie on the Cytoplasmic side of the membrane.

This sequence belongs to the DHHC palmitoyltransferase family. Homooligomers. Heterooligomers with ZDHHC3. Post-translationally, autopalmitoylated. In terms of tissue distribution, widely expressed. Present in Sertoli cells (at protein level).

It is found in the golgi apparatus membrane. It catalyses the reaction L-cysteinyl-[protein] + hexadecanoyl-CoA = S-hexadecanoyl-L-cysteinyl-[protein] + CoA. The catalysed reaction is L-cysteinyl-[protein] + tetradecanoyl-CoA = S-tetradecanoyl-L-cysteinyl-[protein] + CoA. The enzyme catalyses L-cysteinyl-[protein] + octadecanoyl-CoA = S-octadecanoyl-L-cysteinyl-[protein] + CoA. Its function is as follows. Golgi-localized palmitoyltransferase that catalyzes the addition of palmitate onto various protein substrates and therefore functions in several unrelated biological processes. Has no stringent fatty acid selectivity and in addition to palmitate can also transfer onto target proteins myristate from tetradecanoyl-CoA and stearate from octadecanoyl-CoA. Palmitoylates sex steroid hormone receptors, including ESR1, PGR and AR, thereby regulating their targeting to the plasma membrane and their function in rapid intracellular signaling upon binding of sex hormones. Palmitoylates GNAQ, a heterotrimeric G protein, regulating its dynamic localization at the plasma membrane and is thereby involved in GNAQ-dependent G protein-coupled receptor signaling pathways. Also functions in ligand-induced cell death by regulating the FAS signaling pathway through the palmitoylation and stabilization of the receptor at the plasma membrane. In epithelial cells, palmitoylates SCRIB and regulates its localization to the plasma membrane, regulating indirectly cell polarity and differentiation. Also palmitoylates JAM3 and promotes its expression at tight junctions and regulates its function in cell migration. Palmitoylates the glucose transporter GLUT4/SLC2A4 and controls the insulin-dependent translocation of GLUT4 to the plasma membrane. In brain, could also palmitoylate SNAP25 and DLG4/PSD95. Could also palmitoylate DNAJC5 and regulate its localization to the Golgi membrane. Could also palmitoylate NCDN. May play a role in follicle stimulation hormone (FSH) activation of testicular Sertoli cells. Activates pyroptosis by catalyzing palmitoylation of gasdermin-D (GSDMD). In Rattus norvegicus (Rat), this protein is Palmitoyltransferase ZDHHC7.